A 202-amino-acid polypeptide reads, in one-letter code: NADH-quinone oxidoreductase subunit C (202 aa).

It belongs to the complex I 30 kDa subunit family. In terms of assembly, NDH-1 is composed of 14 different subunits. Subunits NuoB, C, D, E, F, and G constitute the peripheral sector of the complex.

The protein resides in the cell inner membrane. The catalysed reaction is a quinone + NADH + 5 H(+)(in) = a quinol + NAD(+) + 4 H(+)(out). In terms of biological role, NDH-1 shuttles electrons from NADH, via FMN and iron-sulfur (Fe-S) centers, to quinones in the respiratory chain. The immediate electron acceptor for the enzyme in this species is believed to be ubiquinone. Couples the redox reaction to proton translocation (for every two electrons transferred, four hydrogen ions are translocated across the cytoplasmic membrane), and thus conserves the redox energy in a proton gradient. In Paracidovorax citrulli (strain AAC00-1) (Acidovorax citrulli), this protein is NADH-quinone oxidoreductase subunit C.